The following is a 110-amino-acid chain: MAAWSPAAAVPLLRGTRRLPLLHWAQRMFASQTEAELKVTQILKEKFPRATAIKVTDISGGCGAMYEIKIESEEFKEKRTVQQHQMVNQALKEEIKGMHGLRIFTSVPKH.

The protein belongs to the BolA/IbaG family. As to quaternary structure, interacts with NFU1.

The protein resides in the mitochondrion. In terms of biological role, acts as a mitochondrial iron-sulfur (Fe-S) cluster assembly factor that facilitates (Fe-S) cluster insertion into a subset of mitochondrial proteins. Probably acts together with NFU1. In Bos taurus (Bovine), this protein is BolA-like protein 3 (BOLA3).